Here is an 87-residue protein sequence, read N- to C-terminus: Large ribosomal subunit protein bL27 (87 aa).

The protein belongs to the bacterial ribosomal protein bL27 family.

This is Large ribosomal subunit protein bL27 from Paenarthrobacter aurescens (strain TC1).